The following is a 124-amino-acid chain: Large ribosomal subunit protein bL12 (124 aa).

Belongs to the bacterial ribosomal protein bL12 family. As to quaternary structure, homodimer. Part of the ribosomal stalk of the 50S ribosomal subunit. Forms a multimeric L10(L12)X complex, where L10 forms an elongated spine to which 2 to 4 L12 dimers bind in a sequential fashion. Binds GTP-bound translation factors.

In terms of biological role, forms part of the ribosomal stalk which helps the ribosome interact with GTP-bound translation factors. Is thus essential for accurate translation. This is Large ribosomal subunit protein bL12 from Cupriavidus necator (strain ATCC 17699 / DSM 428 / KCTC 22496 / NCIMB 10442 / H16 / Stanier 337) (Ralstonia eutropha).